We begin with the raw amino-acid sequence, 292 residues long: Glyoxylase B2 (292 aa).

Residues His72, His74, Asp76, His77, His148, and Asp166 each contribute to the Zn(2+) site. Substrate-binding positions include 175-181, 208-210, and 284-287; these read TARCDFP, HDY, and KIPL. Zn(2+) is bound at residue His208.

This sequence belongs to the metallo-beta-lactamase superfamily. Glyoxalase II family. It depends on Zn(2+) as a cofactor.

This chain is Glyoxylase B2 (gloB2), found in Dictyostelium discoideum (Social amoeba).